Here is a 331-residue protein sequence, read N- to C-terminus: UDP-GalNAc:beta-1,3-N-acetylgalactosaminyltransferase 1 (331 aa).

At 1–20 the chain is on the cytoplasmic side; that stretch reads MAPAVLTAIPNRMSLRSLKW. Residues 21 to 43 traverse the membrane as a helical; Signal-anchor for type II membrane protein segment; the sequence is SLLLLSLLSFLVIWYLSLPHYNV. Over 44–331 the chain is Lumenal; the sequence is IERVNWMYFY…VMLRNTTCHY (288 aa). Asn72, Asn154, Asn198, Asn212, and Asn326 each carry an N-linked (GlcNAc...) asparagine glycan.

It belongs to the glycosyltransferase 31 family. The cofactor is Mg(2+).

It localises to the golgi apparatus membrane. It carries out the reaction a globoside Gb3Cer (d18:1(4E)) + UDP-N-acetyl-alpha-D-galactosamine = a globoside Gb4Cer (d18:1(4E)) + UDP + H(+). It functions in the pathway protein modification; protein glycosylation. Its function is as follows. Transfers N-acetylgalactosamine onto globotriaosylceramide. Plays a critical role in preimplantation stage embryonic development. The polypeptide is UDP-GalNAc:beta-1,3-N-acetylgalactosaminyltransferase 1 (B3galnt1) (Rattus norvegicus (Rat)).